The following is a 388-amino-acid chain: Chorismate synthase (388 aa).

NADP(+)-binding residues include Arg39 and Arg45. The segment at 95–115 (EKQKKIRRVSKPRPGHADLVG) is disordered. Basic residues predominate over residues 98 to 108 (KKIRRVSKPRP). Residues 130 to 132 (RSS), 251 to 252 (NA), Gly296, 311 to 315 (KPIPT), and Arg337 each bind FMN.

It belongs to the chorismate synthase family. Homotetramer. FMNH2 serves as cofactor.

The enzyme catalyses 5-O-(1-carboxyvinyl)-3-phosphoshikimate = chorismate + phosphate. Its pathway is metabolic intermediate biosynthesis; chorismate biosynthesis; chorismate from D-erythrose 4-phosphate and phosphoenolpyruvate: step 7/7. Functionally, catalyzes the anti-1,4-elimination of the C-3 phosphate and the C-6 proR hydrogen from 5-enolpyruvylshikimate-3-phosphate (EPSP) to yield chorismate, which is the branch point compound that serves as the starting substrate for the three terminal pathways of aromatic amino acid biosynthesis. This reaction introduces a second double bond into the aromatic ring system. This Enterococcus faecalis (strain ATCC 700802 / V583) protein is Chorismate synthase.